A 161-amino-acid polypeptide reads, in one-letter code: 3-hydroxyacyl-[acyl-carrier-protein] dehydratase FabZ (161 aa).

His-64 is an active-site residue.

This sequence belongs to the thioester dehydratase family. FabZ subfamily.

It localises to the cytoplasm. It carries out the reaction a (3R)-hydroxyacyl-[ACP] = a (2E)-enoyl-[ACP] + H2O. Its function is as follows. Involved in unsaturated fatty acids biosynthesis. Catalyzes the dehydration of short chain beta-hydroxyacyl-ACPs and long chain saturated and unsaturated beta-hydroxyacyl-ACPs. The sequence is that of 3-hydroxyacyl-[acyl-carrier-protein] dehydratase FabZ from Paramagnetospirillum magneticum (strain ATCC 700264 / AMB-1) (Magnetospirillum magneticum).